The primary structure comprises 227 residues: Ornithine decarboxylase antizyme 1 (227 aa).

Belongs to the ODC antizyme family. In terms of assembly, interacts with ODC1 and thereby sterically blocks ODC homodimerization. Forms a ternary complex with PSMB4 and OAZ1 before PSMB4 is incorporated into the 20S proteasome. Interacts with AZIN2; this interaction disrupts the interaction between the antizyme and ODC1. Interacts with FAM171A1.

Ornithine decarboxylase (ODC) antizyme protein that negatively regulates ODC activity and intracellular polyamine biosynthesis and uptake in response to increased intracellular polyamine levels. Binds to ODC monomers, inhibiting the assembly of the functional ODC homodimer, and targets the monomers for ubiquitin-independent proteolytic destruction by the 26S proteasome. Triggers ODC degradation by inducing the exposure of a cryptic proteasome-interacting surface of ODC. Stabilizes AZIN2 by interfering with its ubiquitination. Also inhibits cellular uptake of polyamines by inactivating the polyamine uptake transporter. SMAD1/OAZ1/PSMB4 complex mediates the degradation of the CREBBP/EP300 repressor SNIP1. Involved in the translocation of AZIN2 from ER-Golgi intermediate compartment (ERGIC) to the cytosol. This chain is Ornithine decarboxylase antizyme 1 (Oaz1), found in Rattus norvegicus (Rat).